The chain runs to 215 residues: UPF0319 protein VV2_0960 (215 aa).

The signal sequence occupies residues 1-21 (MNIIKPLTCILAMSISGLATA).

This sequence belongs to the UPF0319 family.

This Vibrio vulnificus (strain CMCP6) protein is UPF0319 protein VV2_0960.